Here is a 142-residue protein sequence, read N- to C-terminus: MALERTFSIIKPNAVANNNIGAIYARFESAGFKIIAAKMLHLTKEQAEGFYAEHKGRPFFDGLVEFMTSGPIIVQVLEGENAVQRHRDIMGATNPDNALAGTLRADFADSFTANAVHGSDAVESAQREIAYFFAADEIFPRS.

ATP-binding residues include Lys11, Phe59, Arg87, Thr93, Arg104, and Asn114. Catalysis depends on His117, which acts as the Pros-phosphohistidine intermediate.

Belongs to the NDK family. As to quaternary structure, homotetramer. Mg(2+) is required as a cofactor.

The protein resides in the cytoplasm. It carries out the reaction a 2'-deoxyribonucleoside 5'-diphosphate + ATP = a 2'-deoxyribonucleoside 5'-triphosphate + ADP. It catalyses the reaction a ribonucleoside 5'-diphosphate + ATP = a ribonucleoside 5'-triphosphate + ADP. Its function is as follows. Major role in the synthesis of nucleoside triphosphates other than ATP. The ATP gamma phosphate is transferred to the NDP beta phosphate via a ping-pong mechanism, using a phosphorylated active-site intermediate. This is Nucleoside diphosphate kinase from Yersinia pseudotuberculosis serotype I (strain IP32953).